We begin with the raw amino-acid sequence, 875 residues long: cGMP-specific 3',5'-cyclic phosphodiesterase (875 aa).

Disordered stretches follow at residues 1-29 and 78-102; these read MERA…DQDS and SCSC…RKIS. Over residues 10–22 the composition is skewed to low complexity; that stretch reads QQRQQQQPQQQKQ. Residues 78–101 are compositionally biased toward polar residues; that stretch reads SCSCPLQQSPRADNSAPGTPTRKI. Serine 102 bears the Phosphoserine mark. 2 GAF domains span residues 164-314 and 346-503; these read DVTA…GIVL and SLEV…GLGI. In terms of domain architecture, PDEase spans 536–860; the sequence is ETRELQSLAA…QKWQALAEQQ (325 aa). The Proton donor role is filled by histidine 613. Positions 617, 653, 654, and 764 each coordinate Zn(2+). Mg(2+) is bound at residue aspartate 654. Glutamine 817 contacts 3',5'-cyclic GMP.

This sequence belongs to the cyclic nucleotide phosphodiesterase family. It depends on Zn(2+) as a cofactor. Requires Mg(2+) as cofactor. Post-translationally, phosphorylation is regulated by binding of cGMP to the two allosteric sites. Phosphorylation by PRKG1 leads to its activation. In terms of tissue distribution, expressed in aortic smooth muscle cells, heart, placenta, skeletal muscle and pancreas and, to a much lesser extent, in brain, liver and lung.

The enzyme catalyses 3',5'-cyclic GMP + H2O = GMP + H(+). It functions in the pathway purine metabolism; 3',5'-cyclic GMP degradation; GMP from 3',5'-cyclic GMP: step 1/1. Sildenafil (Viagra) is a highly selective and potent inhibitor of PDE5A and is effective in the treatment of penile erectile dysfunction. Also inhibited by zaprinast. In terms of biological role, plays a role in signal transduction by regulating the intracellular concentration of cyclic nucleotides. This phosphodiesterase catalyzes the specific hydrolysis of cGMP to 5'-GMP. Specifically regulates nitric-oxide-generated cGMP. The sequence is that of cGMP-specific 3',5'-cyclic phosphodiesterase from Homo sapiens (Human).